The chain runs to 199 residues: TATA-box-binding protein (199 aa).

2 tandem repeats follow at residues 10–86 and 101–177.

The protein belongs to the TBP family.

In terms of biological role, general factor that plays a role in the activation of archaeal genes transcribed by RNA polymerase. Binds specifically to the TATA box promoter element which lies close to the position of transcription initiation. The polypeptide is TATA-box-binding protein (Pyrobaculum islandicum (strain DSM 4184 / JCM 9189 / GEO3)).